The following is a 190-amino-acid chain: Imidazoleglycerol-phosphate dehydratase (190 aa).

Belongs to the imidazoleglycerol-phosphate dehydratase family.

The protein resides in the cytoplasm. The enzyme catalyses D-erythro-1-(imidazol-4-yl)glycerol 3-phosphate = 3-(imidazol-4-yl)-2-oxopropyl phosphate + H2O. Its pathway is amino-acid biosynthesis; L-histidine biosynthesis; L-histidine from 5-phospho-alpha-D-ribose 1-diphosphate: step 6/9. This is Imidazoleglycerol-phosphate dehydratase from Nitratiruptor sp. (strain SB155-2).